The following is a 169-amino-acid chain: Ribosome maturation factor RimM (169 aa).

One can recognise a PRC barrel domain in the interval 91-167 (EGEYYFADLI…RIVIATDFAH (77 aa)).

It belongs to the RimM family. Binds ribosomal protein uS19.

It is found in the cytoplasm. Its function is as follows. An accessory protein needed during the final step in the assembly of 30S ribosomal subunit, possibly for assembly of the head region. Essential for efficient processing of 16S rRNA. May be needed both before and after RbfA during the maturation of 16S rRNA. It has affinity for free ribosomal 30S subunits but not for 70S ribosomes. The protein is Ribosome maturation factor RimM of Erythrobacter litoralis (strain HTCC2594).